A 424-amino-acid chain; its full sequence is Probable aminotransferase TAT4 (424 aa).

It belongs to the class-I pyridoxal-phosphate-dependent aminotransferase family. Requires pyridoxal 5'-phosphate as cofactor.

This Arabidopsis thaliana (Mouse-ear cress) protein is Probable aminotransferase TAT4.